We begin with the raw amino-acid sequence, 290 residues long: Phosphoribosylaminoimidazole-succinocarboxamide synthase (290 aa).

The protein belongs to the SAICAR synthetase family.

The enzyme catalyses 5-amino-1-(5-phospho-D-ribosyl)imidazole-4-carboxylate + L-aspartate + ATP = (2S)-2-[5-amino-1-(5-phospho-beta-D-ribosyl)imidazole-4-carboxamido]succinate + ADP + phosphate + 2 H(+). The protein operates within purine metabolism; IMP biosynthesis via de novo pathway; 5-amino-1-(5-phospho-D-ribosyl)imidazole-4-carboxamide from 5-amino-1-(5-phospho-D-ribosyl)imidazole-4-carboxylate: step 1/2. The sequence is that of Phosphoribosylaminoimidazole-succinocarboxamide synthase from Haemophilus influenzae (strain PittGG).